The chain runs to 1885 residues: MATRGNVPAHMQASLPALPAHLQSDTHITAHLASRFHVSLPTARLSSQGLICLNTFTSSTRGPNGDKEGSAMGEAEDLARRAWARLGNRAEDQAFVFFGESGSGKTTVRSHLLSSFLSFSSTPLSSKLSLAAFVFDTLTTTKTTTTQTASKAGLFYELQYDASSNNPTLIGGKLLDHRLERSRISHVPTGERSFHVLYYLLAGTSAAEKSHLGLDGHVNITTAGTGLSRSASVSHKRWRYLGHPTQMKVGINDAEGFQHFKNALRKLEFPRTEIAEICQVLAAILHIGQLEFGTGQATLTAAEESGGYSHEGGETVTVVKNRDTLAIVAAFLGLGVQDLEESLRYKTRTIHRERVTVMLDTKGARENADELATTLYSLLVTYIIESINQRVCAAEDSVANTISIVDFPGFADHSSTGSVLDQLLNNAANESLYNTCLHSIFEKTAEMLESEEVSVPATSYFDNSDAVRGLLKHGNGLLAILDDQTRRGRTDVQFLESLRKRFENKNKAITVGSATSTMPGSNFATTNLAASFTVRHYAGEVDYPVHSLVEENGDVVSGDLMNMIKATKSDFVANLFGQEALNTVSHPAEKTAIVQAQVSSKPLRMPSVSRKKHDQLRRMASRRADRSPAPQEEEPLPGTEEAKVRRTKPTATGLTQGAAAQFLSALDNITKSLTAPNVNNYFVFCLKPNDRRIANQFDSKCVRQQVQMFGIAEISQRLRTADFTIFLPFGEFLGLTDADGGVVGSDREKAQLVLDSKHWPPNEARIGNTGVFLSERCWASIALTGSQAAAYFGGDIGSPSRPDTPGHNPFSDSKARLVGSADGTPGSFYGDEAKGGGYFGSRELDAKSDAGASAFHSGDMFRNLETKEELAEKGNKKKVEEVDVVPVSSSRKRWLAIVYFLTWYLPDFAIKWIGGMKRKDVRTAWREKFAINLLIWLSCGLVVFFIIVFPELICPKQNVYSAAELSAHDGKGKHSAYVAIRGQVFDLGAFMPNHYPKIIPQSSLKKYAGVDATGLFPVQVSALCQGKDGRVDPTVQLDYTATNISGTAAVISSTDANRKYHDFRYFTNDSRPDWFYEQMIMLKANYRKGSIGYTPQYVKTLAKKSKSIAILNDRVYDFTTYNEGGRSVRAPPGEEVPSGVDTDFMDSLVVDLFTQRAGHDVTKYWNALPLDPGLRSRMQLCLDNLFFVGVTDTRNSPRCLFARYILLAVSILLCSVIGFKFFAALQFGGKNVPENLDKFVICQVPAYTEDEDSLRRAIDSAARMRYDDKRKLLIVVCDGMIIGQGNDRPTPRIVLDILGVSETVDPEPLSFESLGEGMKQHNMGKVYSGLYEVQGHIVPFMVVVKVGKPSEVSRPGNRGKRDSQMVIMRFLHRVHYNLPMSPLELEMHHQIRNIIGVNPTFYEFMLQIDADTVVAPDSATRMVSAFLRDTRLIGVCGETSLSNAKSSFITMMQVYEYYISHNLTKAFESLFGSVTCLPGCFTMYRIRAAETGKPLFVSKEIIQDYSEIRVDTLHMKNLLHLGEDRYLTTLLLKYHSKYKTKYIFHAHAWTIAPDSWKVFMSQRRRWINSTVHNLIELIPLQQLCGFCCFSMRFVVFLDLLSTVVAPVTVAYIAYLIVLLATESDVVPLTAFILLGAIYGLQAIIFILRRKWEMIGWMIVYILAMPVFSLGLPLYAFWHMDDFSWGNTRLVRGEHGKQILLSDEGKFGPDSIPKKKWEEYQAELWDAQTQRDDARSELSGYSYGTKSYLPTGSVYGGGYNDTQHLMMAPSRSASQLDMHPTPMYGGGGGHNQSRMSLAPSEMLGSQSNLMMPSGRSVADMEMSDLTGLPTDDMLLNEIRDILRTADLMTVTKKGIKQELERRFNVNLDMKRAYIGSATEAILSGQL.

The Myosin motor domain maps to 1 to 789 (MATRGNVPAH…SIALTGSQAA (789 aa)). 99–106 (GESGSGKT) serves as a coordination point for ATP. Residues asparagine 219 and asparagine 429 are each glycosylated (N-linked (GlcNAc...) asparagine). Residues 601 to 649 (KPLRMPSVSRKKHDQLRRMASRRADRSPAPQEEEPLPGTEEAKVRRTKP) form a disordered region. A compositionally biased stretch (basic residues) spans 609-621 (SRKKHDQLRRMAS). The actin-binding stretch occupies residues 666–690 (LDNITKSLTAPNVNNYFVFCLKPND). Residue asparagine 668 is glycosylated (N-linked (GlcNAc...) asparagine). Positions 794–817 (GDIGSPSRPDTPGHNPFSDSKARL) are disordered. Helical transmembrane passes span 894 to 914 (WLAI…KWIG) and 929 to 949 (FAIN…IIVF). A Cytochrome b5 heme-binding domain is found at 957–1016 (QNVYSAAELSAHDGKGKHSAYVAIRGQVFDLGAFMPNHYPKIIPQSSLKKYAGVDATGLF). Asparagine 1043 and asparagine 1068 each carry an N-linked (GlcNAc...) asparagine glycan. A helical transmembrane segment spans residues 1205–1225 (ILLAVSILLCSVIGFKFFAAL). N-linked (GlcNAc...) asparagine glycans are attached at residues asparagine 1462 and asparagine 1568. A run of 3 helical transmembrane segments spans residues 1599–1619 (LLST…IVLL), 1626–1646 (VPLT…IIFI), and 1653–1673 (MIGW…GLPL). N-linked (GlcNAc...) asparagine glycans are attached at residues asparagine 1759 and asparagine 1790. A DEK-C domain is found at 1827–1882 (LPTDDMLLNEIRDILRTADLMTVTKKGIKQELERRFNVNLDMKRAYIGSATEAILS).

The protein in the N-terminal section; belongs to the TRAFAC class myosin-kinesin ATPase superfamily. Myosin family. In the C-terminal section; belongs to the chitin synthase family. Class V subfamily. Maximal activity requires trypsin activation, suggesting a zymogenic nature.

The protein localises to the cell membrane. The protein resides in the membrane. The catalysed reaction is [(1-&gt;4)-N-acetyl-beta-D-glucosaminyl](n) + UDP-N-acetyl-alpha-D-glucosamine = [(1-&gt;4)-N-acetyl-beta-D-glucosaminyl](n+1) + UDP + H(+). Polymerizes chitin, a structural polymer of the cell wall and septum, by transferring the sugar moiety of UDP-GlcNAc to the non-reducing end of the growing chitin polymer. CHS5 is required for the sustained growth at 37 degrees Celsius and is of critical importance for virulence. Especially important at infection temperatures for maintaining the cell wall integrity of developing yeast buds, elongating tips of hyphae, and random sites of expansion in sclerotic forms. In Exophiala dermatitidis (strain ATCC 34100 / CBS 525.76 / NIH/UT8656) (Black yeast), this protein is Chitin synthase 5.